The chain runs to 301 residues: MSIDKSYCGFIAIVGRPNVGKSTLLNKLLGQKISITSRKAQTTRHRIVGIHTEGAYQAIYVDTPGLHMEEKRAINRLMNKAASSSIGDVELVIFVVEGTRWTPDDEMVLNKLRDGKAPVILAVNKVDNVQEKADLLPHLQFLASQMNFLDIVPISAETGLNVDTIAAIVRKHLPEATHHFPEDYITDRSQRFMASEIIREKLMRFLGAELPYSVTVEIERFVSNERGGYDINGLILVEREGQKKMVIGNKGAKIKTIGIEARKDMQEMFEAPVHLELWVKVKSGWADDERALRSLGYVDDL.

In terms of domain architecture, Era-type G spans 7 to 175; the sequence is YCGFIAIVGR…AAIVRKHLPE (169 aa). Residues 15–22 are G1; that stretch reads GRPNVGKS. 15–22 provides a ligand contact to GTP; that stretch reads GRPNVGKS. Residues 41-45 form a G2 region; the sequence is QTTRH. Positions 62 to 65 are G3; it reads DTPG. Residues 62–66 and 124–127 contribute to the GTP site; these read DTPGL and NKVD. Residues 124–127 are G4; that stretch reads NKVD. The tract at residues 154–156 is G5; it reads ISA. Positions 206–283 constitute a KH type-2 domain; that stretch reads LGAELPYSVT…HLELWVKVKS (78 aa).

Belongs to the TRAFAC class TrmE-Era-EngA-EngB-Septin-like GTPase superfamily. Era GTPase family. In terms of assembly, monomer.

It is found in the cytoplasm. It localises to the cell inner membrane. An essential GTPase that binds both GDP and GTP, with rapid nucleotide exchange. Plays a role in 16S rRNA processing and 30S ribosomal subunit biogenesis and possibly also in cell cycle regulation and energy metabolism. This is GTPase Era from Escherichia coli O1:K1 / APEC.